A 20-amino-acid chain; its full sequence is Elongation factor Tu (20 aa).

It belongs to the GTP-binding elongation factor family. EF-Tu/EF-1A subfamily. Monomer.

It localises to the cytoplasm. Functionally, this protein promotes the GTP-dependent binding of aminoacyl-tRNA to the A-site of ribosomes during protein biosynthesis. This Mycoplasmopsis synoviae (Mycoplasma synoviae) protein is Elongation factor Tu (tuf).